A 554-amino-acid polypeptide reads, in one-letter code: (+)-delta-cadinene synthase isozyme XC1 (554 aa).

Residues 1–16 show a composition bias toward low complexity; it reads MASQVSQMPSSSPLSS. Residues 1 to 23 are disordered; it reads MASQVSQMPSSSPLSSNKDEMRP. Mg(2+) contacts are provided by D307, D311, D451, and E455. Residues 307 to 311 carry the DDXXD motif motif; sequence DDTYD.

It belongs to the terpene synthase family. It depends on Mg(2+) as a cofactor.

The catalysed reaction is (2E,6E)-farnesyl diphosphate = (1S,8aR)-delta-cadinene + diphosphate. The protein operates within secondary metabolite biosynthesis; terpenoid biosynthesis. Its function is as follows. Responsible for the cyclization of trans,trans-farnesyl diphosphate (FPP) to (+)-delta cadinene. This Gossypium arboreum (Tree cotton) protein is (+)-delta-cadinene synthase isozyme XC1.